The chain runs to 239 residues: Protein NtpR (239 aa).

One can recognise a Glutamine amidotransferase type-1 domain in the interval 12-239; sequence LIRATDTFQG…GLFDFFVQEF (228 aa). Cys113 (nucleophile) is an active-site residue. Residues His217 and Glu219 contribute to the active site.

This chain is Protein NtpR (ntpR), found in Enterococcus hirae (strain ATCC 9790 / DSM 20160 / JCM 8729 / LMG 6399 / NBRC 3181 / NCIMB 6459 / NCDO 1258 / NCTC 12367 / WDCM 00089 / R).